Consider the following 327-residue polypeptide: MSATLRFGEGNLQYDAQGRLRHLLSTEGLRERELLQILDTAESFLSIANRSVKKTPTLRGRTIANLFFENSTRTRSTFELAAKRLSADVLNIAVSTSSASKGESLTDTIDNLMAMQVDGFVIRHPEAGAAHLVARHLGDSALVVNAGDGQHAHPTQALLDVFTIRRLGGPIEDRVVAIVGDVFHSRVARSQIHALSVLGCPEIRVIGPRTLVPEELSALGVHVYHDLQAGLRGVDVICALRLQRERMESHRLPSLDEFHRRFGLTPERLQWAEPGALVLHPGPMNRGVEIASEVADGAQAVILQQVAHGLAVRMAVLAILAGAAGGA.

Carbamoyl phosphate is bound by residues Arg-73 and Thr-74. Lys-101 provides a ligand contact to L-aspartate. Residues Arg-123, His-153, and Gln-156 each coordinate carbamoyl phosphate. L-aspartate is bound by residues Arg-186 and Arg-241. Residues Gly-282 and Pro-283 each contribute to the carbamoyl phosphate site.

This sequence belongs to the aspartate/ornithine carbamoyltransferase superfamily. ATCase family. In terms of assembly, heterododecamer (2C3:3R2) of six catalytic PyrB chains organized as two trimers (C3), and six regulatory PyrI chains organized as three dimers (R2).

It carries out the reaction carbamoyl phosphate + L-aspartate = N-carbamoyl-L-aspartate + phosphate + H(+). Its pathway is pyrimidine metabolism; UMP biosynthesis via de novo pathway; (S)-dihydroorotate from bicarbonate: step 2/3. Its function is as follows. Catalyzes the condensation of carbamoyl phosphate and aspartate to form carbamoyl aspartate and inorganic phosphate, the committed step in the de novo pyrimidine nucleotide biosynthesis pathway. This chain is Aspartate carbamoyltransferase catalytic subunit, found in Acidithiobacillus ferrooxidans (strain ATCC 23270 / DSM 14882 / CIP 104768 / NCIMB 8455) (Ferrobacillus ferrooxidans (strain ATCC 23270)).